The primary structure comprises 467 residues: ATP synthase subunit beta (467 aa).

Glycine 156–threonine 163 serves as a coordination point for ATP.

The protein belongs to the ATPase alpha/beta chains family. As to quaternary structure, F-type ATPases have 2 components, CF(1) - the catalytic core - and CF(0) - the membrane proton channel. CF(1) has five subunits: alpha(3), beta(3), gamma(1), delta(1), epsilon(1). CF(0) has three main subunits: a(1), b(2) and c(9-12). The alpha and beta chains form an alternating ring which encloses part of the gamma chain. CF(1) is attached to CF(0) by a central stalk formed by the gamma and epsilon chains, while a peripheral stalk is formed by the delta and b chains.

The protein resides in the cell membrane. The catalysed reaction is ATP + H2O + 4 H(+)(in) = ADP + phosphate + 5 H(+)(out). Produces ATP from ADP in the presence of a proton gradient across the membrane. The catalytic sites are hosted primarily by the beta subunits. This is ATP synthase subunit beta from Cytobacillus firmus (Bacillus firmus).